Reading from the N-terminus, the 144-residue chain is MDKYLIINTKILPEVFGKVLQAKELLRTGKAKDITEASKIVGISRSSYYKYKDFVFSVLEGTHVQKATIGFLLSHKAGTLSRILDRIAQINGNILTINQDIPVNNAASVTITFDISNMVVELNEFLREMQEMDNVVKVSLIAME.

The ACT domain occupies 68 to 143 (TIGFLLSHKA…NVVKVSLIAM (76 aa)).

Belongs to the UPF0735 family.

This chain is UPF0735 ACT domain-containing protein NT01CX_1681, found in Clostridium novyi (strain NT).